Here is a 456-residue protein sequence, read N- to C-terminus: Methylenetetrahydrofolate--tRNA-(uracil-5-)-methyltransferase TrmFO (456 aa).

9–14 serves as a coordination point for FAD; sequence GGGMAG.

This sequence belongs to the MnmG family. TrmFO subfamily. Requires FAD as cofactor.

The protein localises to the cytoplasm. The enzyme catalyses uridine(54) in tRNA + (6R)-5,10-methylene-5,6,7,8-tetrahydrofolate + NADH + H(+) = 5-methyluridine(54) in tRNA + (6S)-5,6,7,8-tetrahydrofolate + NAD(+). The catalysed reaction is uridine(54) in tRNA + (6R)-5,10-methylene-5,6,7,8-tetrahydrofolate + NADPH + H(+) = 5-methyluridine(54) in tRNA + (6S)-5,6,7,8-tetrahydrofolate + NADP(+). In terms of biological role, catalyzes the folate-dependent formation of 5-methyl-uridine at position 54 (M-5-U54) in all tRNAs. The protein is Methylenetetrahydrofolate--tRNA-(uracil-5-)-methyltransferase TrmFO of Novosphingobium aromaticivorans (strain ATCC 700278 / DSM 12444 / CCUG 56034 / CIP 105152 / NBRC 16084 / F199).